A 539-amino-acid polypeptide reads, in one-letter code: Phosphoenolpyruvate carboxykinase (ATP) (539 aa).

Positions 64, 206, and 212 each coordinate substrate. ATP is bound by residues Lys212, His231, and 247–255 (GLSGTGKTT). 2 residues coordinate Mn(2+): Lys212 and His231. Asp268 serves as a coordination point for Mn(2+). Residues Glu296, Arg332, 448–449 (RI), and Thr454 each bind ATP. Arg332 lines the substrate pocket.

Belongs to the phosphoenolpyruvate carboxykinase (ATP) family. In terms of assembly, monomer. The cofactor is Mn(2+).

It localises to the cytoplasm. It catalyses the reaction oxaloacetate + ATP = phosphoenolpyruvate + ADP + CO2. It participates in carbohydrate biosynthesis; gluconeogenesis. Functionally, involved in the gluconeogenesis. Catalyzes the conversion of oxaloacetate (OAA) to phosphoenolpyruvate (PEP) through direct phosphoryl transfer between the nucleoside triphosphate and OAA. This is Phosphoenolpyruvate carboxykinase (ATP) from Edwardsiella ictaluri (strain 93-146).